Here is a 234-residue protein sequence, read N- to C-terminus: Small ribosomal subunit protein eS4 (234 aa).

An S4 RNA-binding; degenerate domain is found at 38 to 99 (IPLLIALRDY…GNDYLVSYDR (62 aa)).

It belongs to the eukaryotic ribosomal protein eS4 family.

This Picrophilus torridus (strain ATCC 700027 / DSM 9790 / JCM 10055 / NBRC 100828 / KAW 2/3) protein is Small ribosomal subunit protein eS4 (rps4e).